Consider the following 476-residue polypeptide: Aspartyl/glutamyl-tRNA(Asn/Gln) amidotransferase subunit B (476 aa).

It belongs to the GatB/GatE family. GatB subfamily. In terms of assembly, heterotrimer of A, B and C subunits.

It catalyses the reaction L-glutamyl-tRNA(Gln) + L-glutamine + ATP + H2O = L-glutaminyl-tRNA(Gln) + L-glutamate + ADP + phosphate + H(+). It carries out the reaction L-aspartyl-tRNA(Asn) + L-glutamine + ATP + H2O = L-asparaginyl-tRNA(Asn) + L-glutamate + ADP + phosphate + 2 H(+). Allows the formation of correctly charged Asn-tRNA(Asn) or Gln-tRNA(Gln) through the transamidation of misacylated Asp-tRNA(Asn) or Glu-tRNA(Gln) in organisms which lack either or both of asparaginyl-tRNA or glutaminyl-tRNA synthetases. The reaction takes place in the presence of glutamine and ATP through an activated phospho-Asp-tRNA(Asn) or phospho-Glu-tRNA(Gln). The protein is Aspartyl/glutamyl-tRNA(Asn/Gln) amidotransferase subunit B of Bacillus velezensis (strain DSM 23117 / BGSC 10A6 / LMG 26770 / FZB42) (Bacillus amyloliquefaciens subsp. plantarum).